The primary structure comprises 110 residues: MEMLLFLNESYIFHRLRMWSTVLWHSCVFVCVECENANYRVPRCLIKPFSVPVTFPFSVKKNIRILDLDPRTEAYCLSPYSVCSKRLPCKKYFYLLNSYNIKRVLGVVYC.

This sequence belongs to the UPF0377 family.

This Saccharomyces cerevisiae (strain ATCC 204508 / S288c) (Baker's yeast) protein is Putative UPF0377 protein YKL223W.